Reading from the N-terminus, the 462-residue chain is UPF0236 protein TTE2489 (462 aa).

The protein belongs to the UPF0236 family.

The polypeptide is UPF0236 protein TTE2489 (Caldanaerobacter subterraneus subsp. tengcongensis (strain DSM 15242 / JCM 11007 / NBRC 100824 / MB4) (Thermoanaerobacter tengcongensis)).